A 248-amino-acid chain; its full sequence is Ubiquinone/menaquinone biosynthesis C-methyltransferase UbiE (248 aa).

2 residues coordinate S-adenosyl-L-methionine: S68 and D92.

The protein belongs to the class I-like SAM-binding methyltransferase superfamily. MenG/UbiE family.

The enzyme catalyses a 2-demethylmenaquinol + S-adenosyl-L-methionine = a menaquinol + S-adenosyl-L-homocysteine + H(+). The catalysed reaction is a 2-methoxy-6-(all-trans-polyprenyl)benzene-1,4-diol + S-adenosyl-L-methionine = a 5-methoxy-2-methyl-3-(all-trans-polyprenyl)benzene-1,4-diol + S-adenosyl-L-homocysteine + H(+). It functions in the pathway quinol/quinone metabolism; menaquinone biosynthesis; menaquinol from 1,4-dihydroxy-2-naphthoate: step 2/2. Its pathway is cofactor biosynthesis; ubiquinone biosynthesis. Its function is as follows. Methyltransferase required for the conversion of demethylmenaquinol (DMKH2) to menaquinol (MKH2) and the conversion of 2-polyprenyl-6-methoxy-1,4-benzoquinol (DDMQH2) to 2-polyprenyl-3-methyl-6-methoxy-1,4-benzoquinol (DMQH2). The sequence is that of Ubiquinone/menaquinone biosynthesis C-methyltransferase UbiE from Rickettsia peacockii (strain Rustic).